We begin with the raw amino-acid sequence, 652 residues long: Anaphase-promoting complex subunit 4 (652 aa).

The APC/C is composed of at least 13 subunits that stay tightly associated throughout the cell cycle: APC1, APC2, APC4, APC5, APC9, APC11, CDC16, CDC23, CDC26, CDC27, DOC1, MND2 and SWM1.

It is found in the cytoplasm. The protein resides in the nucleus. It functions in the pathway protein modification; protein ubiquitination. Functionally, component of the anaphase promoting complex/cyclosome (APC/C), a cell cycle-regulated E3 ubiquitin-protein ligase complex that controls progression through mitosis and the G1 phase of the cell cycle. The APC/C is thought to confer substrate specificity and, in the presence of ubiquitin-conjugating E2 enzymes, it catalyzes the formation of protein-ubiquitin conjugates that are subsequently degraded by the 26S proteasome. In early mitosis, the APC/C is activated by CDC20 and targets securin PDS1, the B-type cyclin CLB5, and other anaphase inhibitory proteins for proteolysis, thereby triggering the separation of sister chromatids at the metaphase-to-anaphase transition. In late mitosis and in G1, degradation of CLB5 allows activation of the APC/C by CDH1, which is needed to destroy CDC20 and the B-type cyclin CLB2 to allow exit from mitosis and creating the low CDK state necessary for cytokinesis and for reforming prereplicative complexes in G1 prior to another round of replication. In Saccharomyces cerevisiae (strain ATCC 204508 / S288c) (Baker's yeast), this protein is Anaphase-promoting complex subunit 4 (APC4).